Reading from the N-terminus, the 199-residue chain is Protein GrpE (199 aa).

The interval 1 to 50 (MAKKSTRTTPEDSQASTTDSAATSTASEATQAATSATDDQAEQTTAVDPT) is disordered. Low complexity predominate over residues 11–46 (EDSQASTTDSAATSTASEATQAATSATDDQAEQTTA).

This sequence belongs to the GrpE family. As to quaternary structure, homodimer.

It localises to the cytoplasm. In terms of biological role, participates actively in the response to hyperosmotic and heat shock by preventing the aggregation of stress-denatured proteins, in association with DnaK and GrpE. It is the nucleotide exchange factor for DnaK and may function as a thermosensor. Unfolded proteins bind initially to DnaJ; upon interaction with the DnaJ-bound protein, DnaK hydrolyzes its bound ATP, resulting in the formation of a stable complex. GrpE releases ADP from DnaK; ATP binding to DnaK triggers the release of the substrate protein, thus completing the reaction cycle. Several rounds of ATP-dependent interactions between DnaJ, DnaK and GrpE are required for fully efficient folding. In Lactiplantibacillus plantarum (strain ATCC BAA-793 / NCIMB 8826 / WCFS1) (Lactobacillus plantarum), this protein is Protein GrpE.